We begin with the raw amino-acid sequence, 1226 residues long: Probable phosphorylase b kinase regulatory subunit alpha (1226 aa).

Residues 666–688 form a disordered region; the sequence is NEKITTPRGPRTLRRGESVKDRS. A compositionally biased stretch (basic and acidic residues) spans 679–688; it reads RRGESVKDRS.

This sequence belongs to the phosphorylase b kinase regulatory chain family.

The protein operates within glycan biosynthesis; glycogen metabolism. Functionally, phosphorylase b kinase catalyzes the phosphorylation of serine in certain substrates, including troponin I. The alpha chain may bind calmodulin. This is Probable phosphorylase b kinase regulatory subunit alpha from Caenorhabditis elegans.